The chain runs to 153 residues: Endoribonuclease YbeY (153 aa).

The Zn(2+) site is built by histidine 114, histidine 118, and histidine 124.

This sequence belongs to the endoribonuclease YbeY family. Zn(2+) serves as cofactor.

The protein localises to the cytoplasm. Its function is as follows. Single strand-specific metallo-endoribonuclease involved in late-stage 70S ribosome quality control and in maturation of the 3' terminus of the 16S rRNA. The chain is Endoribonuclease YbeY from Shewanella sp. (strain MR-4).